A 339-amino-acid polypeptide reads, in one-letter code: Pyrimidine monooxygenase RutA (339 aa).

Residues 26–27 (IK), N92, E101, 117–118 (RY), and S167 contribute to the FMN site.

It belongs to the NtaA/SnaA/DszA monooxygenase family. RutA subfamily.

The enzyme catalyses uracil + FMNH2 + NADH + O2 = (Z)-3-ureidoacrylate + FMN + NAD(+) + H2O + H(+). It carries out the reaction thymine + FMNH2 + NADH + O2 = (Z)-2-methylureidoacrylate + FMN + NAD(+) + H2O + H(+). In terms of biological role, catalyzes the pyrimidine ring opening between N-3 and C-4 by an unusual flavin hydroperoxide-catalyzed mechanism, adding oxygen atoms in the process to yield ureidoacrylate peracid, that immediately reacts with FMN forming ureidoacrylate and FMN-N(5)-oxide. The FMN-N(5)-oxide reacts spontaneously with NADH to produce FMN. Requires the flavin reductase RutF to regenerate FMN in vivo. This is Pyrimidine monooxygenase RutA from Cronobacter sakazakii (strain ATCC BAA-894) (Enterobacter sakazakii).